The primary structure comprises 351 residues: Phenylacetaldoxime dehydratase (351 aa).

This sequence belongs to the heme-containing dehydratase family. As to quaternary structure, monomer. Heme b is required as a cofactor.

It carries out the reaction (Z)-phenylacetaldehyde oxime = phenylacetonitrile + H2O. Functionally, catalyzes the stoichiometric dehydration of Z-phenylacetaldoxime to phenylacetonitrile. Prefers the Z-form of phenylacetaldoxime over its E-isomer. The protein is Phenylacetaldoxime dehydratase of Bacillus sp. (strain OxB-1).